The primary structure comprises 355 residues: Probable NADPH-dependent quinone reductase tdiC (355 aa).

This sequence belongs to the zinc-containing alcohol dehydrogenase family. The cofactor is NADPH.

It participates in secondary metabolite biosynthesis. Its function is as follows. Probable NADPH-dependent quinone reductase; part of the gene cluster that mediates the biosynthesis of terrequinone A, an antitumor agent. The first step in the biosynthetic pathway for terrequinone A is formation of indole pyruvic acid (IPA) from L-tryptophan by the aminotransferase tdiD. The nonribosomal peptide synthase tdiA then immediately converts unstable IPA to didemethylasterriquinone D (DDAQ D), via condensation of 2 IPA molecules. The symmetric connectivity of the 2 IPA molecules is thought to arise by head-to-tail dual Claisen condensations facilitated by the TE domain. TdiB then catalyzes reverse prenylation by transferring dimethylallyl diphosphate to carbon atom 2' of DDAQ D, to yield asterriquinone C-1. Finally, tdiC and tdiE enzymes robustly convert asterriquinone C-1 to terrequinone A via a transformation involving regular prenylation at carbon atom 5, which requires elimination of the hydroxy group on C-5. The sequence is that of Probable NADPH-dependent quinone reductase tdiC from Emericella nidulans (strain FGSC A4 / ATCC 38163 / CBS 112.46 / NRRL 194 / M139) (Aspergillus nidulans).